The sequence spans 120 residues: Chaperonin GroEL (120 aa).

23-27 (DGTTT) contributes to the ATP binding site.

The protein belongs to the chaperonin (HSP60) family. Forms a cylinder of 14 subunits composed of two heptameric rings stacked back-to-back. Interacts with the co-chaperonin GroES.

The protein localises to the cytoplasm. It carries out the reaction ATP + H2O + a folded polypeptide = ADP + phosphate + an unfolded polypeptide.. Its function is as follows. Together with its co-chaperonin GroES, plays an essential role in assisting protein folding. The GroEL-GroES system forms a nano-cage that allows encapsulation of the non-native substrate proteins and provides a physical environment optimized to promote and accelerate protein folding. In Mycobacterium xenopi, this protein is Chaperonin GroEL.